The primary structure comprises 204 residues: Rho GDP-dissociation inhibitor 1 (204 aa).

Positions 1–36 are disordered; that stretch reads MAEQEPTAEQLAQIAAENEEDEHSVNYKPPAQKSIQ. An N-acetylalanine modification is found at alanine 2. A Phosphoserine modification is found at serine 34. Lysine 43 carries the post-translational modification N6-acetyllysine. Serine 47 is subject to Phosphoserine. N6-acetyllysine is present on residues lysine 105 and lysine 127. Residues lysine 138 and lysine 141 each participate in a glycyl lysine isopeptide (Lys-Gly) (interchain with G-Cter in SUMO1); alternate cross-link. Residues lysine 138 and lysine 141 each participate in a glycyl lysine isopeptide (Lys-Gly) (interchain with G-Cter in SUMO2); alternate cross-link. Lysine 141 carries the post-translational modification N6-acetyllysine; alternate. Lysine 141 carries the post-translational modification N6-succinyllysine; alternate. Lysine 178 is subject to N6-acetyllysine.

Belongs to the Rho GDI family. As to quaternary structure, monomer. Interacts with FER. Interacts with PLXNB3. Forms a heterodimer with RAC1. Interacts with RHOA, the affinity is increased by three orders of magnitude when RHOA is prenylated. Interacts with PSMD10; the interaction increases ARHGDIA association with RHOA, leading to ARHGDIA-mediated inactivation of RHOA and ROCK and prolonged AKT activation. Interacts with KANK2; the interaction is direct and may regulate the interaction of ARHGDIA with RHOA, RAC1 and CDC42. Interacts with RHOC. Interacts with CDC42. Interacts with NGFR (via death domain); NGFR binding decreases the affinity for RHOA. In kidney glomerulus, expressed in podocytes and mesangial cells.

The protein resides in the cytoplasm. In terms of biological role, controls Rho proteins homeostasis. Regulates the GDP/GTP exchange reaction of the Rho proteins by inhibiting the dissociation of GDP from them, and the subsequent binding of GTP to them. Retains Rho proteins such as CDC42, RAC1 and RHOA in an inactive cytosolic pool, regulating their stability and protecting them from degradation. Actively involved in the recycling and distribution of activated Rho GTPases in the cell, mediates extraction from membranes of both inactive and activated molecules due its exceptionally high affinity for prenylated forms. Through the modulation of Rho proteins, may play a role in cell motility regulation. In glioma cells, inhibits cell migration and invasion by mediating the signals of SEMA5A and PLXNB3 that lead to inactivation of RAC1. In Mus musculus (Mouse), this protein is Rho GDP-dissociation inhibitor 1 (Arhgdia).